We begin with the raw amino-acid sequence, 1031 residues long: Toll-like receptor 9 (1031 aa).

The signal sequence occupies residues 1 to 25 (MGPCHGALQPLSLLVQAAMLAVALA). Topologically, residues 26–817 (QGTLPPFLPC…LCLDESLSWD (792 aa)) are extracellular. Cys-35 and Cys-45 are disulfide-bonded. 47 to 51 (WLFLK) contacts DNA. LRR repeat units follow at residues 62 to 85 (RDNV…DFAQ), 87 to 110 (SNLQ…HFPC), 122 to 147 (VPTL…SLVS), 150 to 166 (LSRT…LTGL), 167 to 190 (HALR…ALEV), 198 to 221 (LGNL…LPPS), 223 to 242 (EYLL…DLAN), 243 to 268 (LTAL…CVEC), 283 to 306 (LSRL…WFRG), 308 to 332 (GNLT…AFQG), 333 to 356 (LAQL…HLTL), 363 to 386 (LLSL…TLQP), 390 to 413 (LPML…IFKD), 414 to 438 (FPGL…ATTG), 470 to 494 (CKNL…MFAQ), 496 to 519 (SRLQ…QFVP), 520 to 543 (LTSL…SFTE), 545 to 567 (PRLE…VGHN), 574 to 598 (LPTL…LCST), 600 to 622 (LWAL…LYLR), 627 to 650 (LRSL…TLGN), 652 to 675 (PKSL…SLTL), 676 to 699 (LPNL…SLPS), 701 to 723 (TQLQ…FFAL), 724 to 747 (ATRL…WFGF), and 749 to 772 (AGSL…AFVD). Asn-64 carries an N-linked (GlcNAc...) asparagine glycan. Residues 72–77 (SNRIHH) and 95–109 (KWNC…MHFP) each bind DNA. Cysteines 98 and 110 form a disulfide. The N-linked (GlcNAc...) asparagine glycan is linked to Asn-129. Residues Tyr-132, Arg-152, and 179–181 (YYK) each bind DNA. An intrachain disulfide couples Cys-178 to Cys-184. Residue Asn-200 is glycosylated (N-linked (GlcNAc...) asparagine). Tyr-208 is a DNA binding site. N-linked (GlcNAc...) asparagine glycosylation is found at Asn-210 and Asn-242. Intrachain disulfides connect Cys-255–Cys-268 and Cys-258–Cys-265. Cys-258 is lipidated: S-palmitoyl cysteine. A DNA-binding site is contributed by Arg-262. Residue Cys-265 is the site of S-palmitoyl cysteine attachment. Residues Asn-309 and Asn-340 are each glycosylated (N-linked (GlcNAc...) asparagine). The cysteines at positions 470 and 500 are disulfide-linked. N-linked (GlcNAc...) asparagine glycosylation is found at Asn-472 and Asn-513. Asn-567 is a glycosylation site (N-linked (GlcNAc...) asparagine). Residues Asn-669 and Asn-694 are each glycosylated (N-linked (GlcNAc...) asparagine). An N-linked (GlcNAc...) asparagine glycan is attached at Asn-731. Disulfide bonds link Cys-764–Cys-790 and Cys-766–Cys-809. A helical membrane pass occupies residues 818 to 838 (CFGLSLLVVALGLAMPMLHHL). The Cytoplasmic segment spans residues 839 to 1031 (CGWDLWYCFH…NFCRGPTMAE (193 aa)). Positions 866-1011 (LSYDAFVVFD…SFWAQLGMAL (146 aa)) constitute a TIR domain.

This sequence belongs to the Toll-like receptor family. In terms of assembly, monomer and homodimer. Exists as a monomer in the absence of unmethylated cytidine-phosphate-guanosine (CpG) ligand. Proteolytic processing of an insertion loop (Z-loop) is required for homodimerization upon binding to the unmethylated CpG ligand leading to its activation. Interacts with MYD88 via their respective TIR domains. Interacts with BTK. Interacts (via transmembrane domain) with UNC93B1. Interacts with CD300LH; the interaction may promote full activation of TLR9-triggered innate responses. Interacts with CNPY3 and HSP90B1; this interaction is required for proper folding in the endoplasmic reticulum. Interacts with SMPDL3B. Interacts with CD82; this interaction is essential for TLR9-dependent myddosome formation in response to CpG stimulation. Activated by proteolytic cleavage of the flexible loop between repeats LRR14 and LRR15 within the ectodomain. Cleavage requires UNC93B1. Proteolytically processed by first removing the majority of the ectodomain by either asparagine endopeptidase (AEP) or a cathepsin followed by a trimming event that is solely cathepsin mediated and required for optimal receptor signaling. Post-translationally, palmitoylated by ZDHHC3 in the Golgi regulates TLR9 trafficking from the Golgi to endosomes. Depalmitoylation by PPT1 controls the release of TLR9 from UNC93B1 in endosomes. As to expression, expressed in airway epithelium, vascular endothelium and inflammatory cells in blood vessels of the lungs (at protein level). Highly expressed in pulmonary intravascular macrophages (PIMs) and to a lesser extent in alveolar macrophages, neutrophiles, type-II alveolar epithelial cells and bronchial epithelial cells of the lungs (at protein level). High constitutive intracellular expression in leukocytes including polymorphonuclear leukocytes (PMNs), CD4 and CD8 T cells (at protein level). Expressed throughout the respiratory tract including larynx, upper, middle and lower trachea, and bronchus in isolated equine respiratory epithelial cells (ERECs) and in fully differentiated ERECs cultured at the air-fluid interface (AFI) (at protein level). Constitutively expressed in peripheral blood mononuclear cells (PBMCs), lymph nodes and spleen. The level of expression in PBMCs is about 2- to 3-fold higher than that in lymph nodes and spleen. Very low expression in liver, heart, lung, kidney, small intestine, colon and stomach. Low expression in the airway tissue epithelium of the larynx, upper trachea, middle tranchea, lower trachea, bronchus and spleen, and more abundant expression in mesenteric lymph node. Not expressed in fully differentiated bronchus epithelial cells cultured at the AFI for four weeks. Expressed in gingival tissue.

It is found in the endoplasmic reticulum membrane. The protein localises to the endosome. The protein resides in the lysosome. Its subcellular location is the cytoplasmic vesicle. It localises to the phagosome. It is found in the cell membrane. The protein localises to the cytoplasm. The protein resides in the nucleus. Functionally, key component of innate and adaptive immunity. TLRs (Toll-like receptors) control host immune response against pathogens through recognition of molecular patterns specific to microorganisms. TLR9 is a nucleotide-sensing TLR which is activated by unmethylated cytidine-phosphate-guanosine (CpG) dinucleotides. Acts via MYD88 and TRAF6, leading to NF-kappa-B activation, cytokine secretion and the inflammatory response. Upon CpG stimulation, induces B-cell proliferation, activation, survival and antibody production. This Equus caballus (Horse) protein is Toll-like receptor 9.